The sequence spans 209 residues: Ribonuclease HII (209 aa).

An RNase H type-2 domain is found at 18 to 209 (GLVAGVDEVG…FKPVKALLER (192 aa)). A divalent metal cation-binding residues include D24, E25, and D116.

The protein belongs to the RNase HII family. Mn(2+) is required as a cofactor. Requires Mg(2+) as cofactor.

The protein localises to the cytoplasm. The catalysed reaction is Endonucleolytic cleavage to 5'-phosphomonoester.. Endonuclease that specifically degrades the RNA of RNA-DNA hybrids. This chain is Ribonuclease HII, found in Shewanella sp. (strain MR-7).